A 199-amino-acid polypeptide reads, in one-letter code: Adenylyl-sulfate kinase (199 aa).

35 to 42 (GLSGSGKS) is a binding site for ATP. Serine 109 serves as the catalytic Phosphoserine intermediate.

Belongs to the APS kinase family.

It carries out the reaction adenosine 5'-phosphosulfate + ATP = 3'-phosphoadenylyl sulfate + ADP + H(+). Its pathway is sulfur metabolism; hydrogen sulfide biosynthesis; sulfite from sulfate: step 2/3. Catalyzes the synthesis of activated sulfate. This Clostridium kluyveri (strain ATCC 8527 / DSM 555 / NBRC 12016 / NCIMB 10680 / K1) protein is Adenylyl-sulfate kinase.